Here is a 479-residue protein sequence, read N- to C-terminus: Long-chain alcohol oxidase (479 aa).

Residues 14-183 (QILRPSAAYT…LAVRIRCREQ (170 aa)) enclose the FAD-binding PCMH-type domain. Histidine 49 is subject to Pros-8alpha-FAD histidine. Residues threonine 113, glycine 116, 120–123 (TGTH), and isoleucine 173 each bind FAD. The chain crosses the membrane as a helical span at residues 241–258 (LYWLGTMDYGLILQILFL). Residues arginine 369 and histidine 425 each coordinate FAD.

Belongs to the oxygen-dependent FAD-linked oxidoreductase family. FAD is required as a cofactor.

The protein resides in the cell membrane. The catalysed reaction is a long-chain primary fatty alcohol + O2 = a long-chain fatty aldehyde + H2O2. The enzyme catalyses dodecan-1-ol + O2 = dodecanal + H2O2. It catalyses the reaction tetradecan-1-ol + O2 = tetradecanal + H2O2. It carries out the reaction octan-1-ol + O2 = octanal + H2O2. The catalysed reaction is decan-1-ol + O2 = decanal + H2O2. Its pathway is lipid metabolism; fatty acid metabolism. Its function is as follows. In vitro catalyzes the oxidation of a range of fatty alcohols having a carbon chain length of six and above, with a reduction of O2 to H2O2. Shows the highest activity with 1-dodecanol. Is likely involved in lipid metabolism. This is Long-chain alcohol oxidase from Uncultured marine euryarchaeote.